A 204-amino-acid chain; its full sequence is HTH-type transcriptional repressor KstR2 (204 aa).

Residues S13–L73 form the HTH tetR-type domain. The H-T-H motif DNA-binding region spans T36–F55.

Homodimer.

Functionally, controls the expression of a small regulon that may play a role in the utilization of cholesterol. This Rhodococcus jostii (strain RHA1) protein is HTH-type transcriptional repressor KstR2 (kstR2).